Here is a 615-residue protein sequence, read N- to C-terminus: ABC transporter G family member 22 (615 aa).

An ABC transporter domain is found at 31-279 (ITFKDLAYSV…EIGFPFPDQT (249 aa)). Position 67-74 (67-74 (GPSGSGKT)) interacts with ATP. The ABC transmembrane type-2 domain occupies 364–610 (SNCLVRFAVA…TMVFLCLHYF (247 aa)). The next 6 helical transmembrane spans lie at 370–390 (FAVA…LGMD), 400–420 (VLFY…SLFI), 442–462 (LALM…LGTI), 477–497 (FFAM…MLII), 508–528 (FAVG…FVPI), and 587–607 (INLI…FLCL).

The protein belongs to the ABC transporter superfamily. ABCG family. Eye pigment precursor importer (TC 3.A.1.204) subfamily.

The protein resides in the membrane. Functionally, may be involved in cell migration. The protein is ABC transporter G family member 22 (abcG22) of Dictyostelium discoideum (Social amoeba).